An 85-amino-acid chain; its full sequence is Large ribosomal subunit protein bL27 (85 aa).

The disordered stretch occupies residues 1–20 (MAHKKAGGSTRNGRDSEAKR).

The protein belongs to the bacterial ribosomal protein bL27 family.

This chain is Large ribosomal subunit protein bL27, found in Cronobacter sakazakii (strain ATCC BAA-894) (Enterobacter sakazakii).